The primary structure comprises 1498 residues: Transposon Ty3-I Gag-Pol polyprotein (1498 aa).

The CCHC-type zinc finger occupies 265 to 282 (RLCFYCKKEGHRLNECRA). Aspartate 336 serves as the catalytic For protease activity; shared with dimeric partner. Residues 470-490 (TDPKSAGNRGNPRNTKLSLAP) are disordered. The Reverse transcriptase domain occupies 646 to 823 (LDNKFIVPSK…EETEFLGYSI (178 aa)). Mg(2+)-binding residues include aspartate 712, aspartate 774, and aspartate 775. Residues 919 to 1037 (DASKDGIGAV…VADAISRAIY (119 aa)) form the RNase H Ty3/gyspy-type domain. Residues 1132-1171 (HTLFGGHFGVTVTLAKISPIYYWPKLQHSIIQYIRTCVQC) are integrase-type zinc finger-like. The Integrase catalytic domain maps to 1185–1350 (LQPLPIAEGR…SPFEIDLGYL (166 aa)). Mg(2+)-binding residues include aspartate 1201 and aspartate 1262.

As to quaternary structure, the protease is a homodimer, whose active site consists of two apposed aspartic acid residues. Post-translationally, initially, virus-like particles (VLPs) are composed of the structural unprocessed proteins Gag and Gag-Pol, and also contain the host initiator methionine tRNA (tRNA(i)-Met) which serves as a primer for minus-strand DNA synthesis, and a dimer of genomic Ty RNA. Processing of the polyproteins occurs within the particle and proceeds by an ordered pathway, called maturation. First, the protease (PR) is released by autocatalytic cleavage of the Gag-Pol polyprotein, and this cleavage is a prerequisite for subsequent processing at the remaining sites to release the mature structural and catalytic proteins. Maturation takes place prior to the RT reaction and is required to produce transposition-competent VLPs.

Its subcellular location is the cytoplasm. It localises to the nucleus. It catalyses the reaction DNA(n) + a 2'-deoxyribonucleoside 5'-triphosphate = DNA(n+1) + diphosphate. It carries out the reaction Endonucleolytic cleavage to 5'-phosphomonoester.. Its function is as follows. Capsid protein (CA) is the structural component of the virus-like particle (VLP), forming the shell that encapsulates the genomic RNA-nucleocapsid complex. Functionally, nucleocapsid protein p11 (NC) forms the nucleocore that coats the retro-elements dimeric RNA. Binds these RNAs through its zinc fingers. Promotes primer tRNA(i)-Met annealing to the multipartite primer-binding site (PBS), dimerization of Ty3 RNA and initiation of reverse transcription. The aspartyl protease (PR) mediates the proteolytic cleavages of the Gag and Gag-Pol polyproteins after assembly of the VLP. In terms of biological role, reverse transcriptase/ribonuclease H (RT) is a multifunctional enzyme that catalyzes the conversion of the retro-elements RNA genome into dsDNA within the VLP. The enzyme displays a DNA polymerase activity that can copy either DNA or RNA templates, and a ribonuclease H (RNase H) activity that cleaves the RNA strand of RNA-DNA heteroduplexes during plus-strand synthesis and hydrolyzes RNA primers. The conversion leads to a linear dsDNA copy of the retrotransposon that includes long terminal repeats (LTRs) at both ends. Its function is as follows. Integrase (IN) targets the VLP to the nucleus, where a subparticle preintegration complex (PIC) containing at least integrase and the newly synthesized dsDNA copy of the retrotransposon must transit the nuclear membrane. Once in the nucleus, integrase performs the integration of the dsDNA into the host genome. This chain is Transposon Ty3-I Gag-Pol polyprotein (TY3B-I), found in Saccharomyces cerevisiae (strain ATCC 204508 / S288c) (Baker's yeast).